Reading from the N-terminus, the 437-residue chain is Aspartate aminotransferase, mitochondrial (437 aa).

The L-aspartate site is built by G72, W167, and N220. N6-(pyridoxal phosphate)lysine is present on K284. R413 lines the L-aspartate pocket.

The protein belongs to the class-I pyridoxal-phosphate-dependent aminotransferase family. Homodimer. It depends on pyridoxal 5'-phosphate as a cofactor.

It localises to the mitochondrion matrix. The enzyme catalyses L-aspartate + 2-oxoglutarate = oxaloacetate + L-glutamate. In terms of biological role, plays a key role in amino acid metabolism. Important for metabolite exchange between mitochondria and cytosol. The protein is Aspartate aminotransferase, mitochondrial of Schizosaccharomyces pombe (strain 972 / ATCC 24843) (Fission yeast).